Consider the following 251-residue polypeptide: 1-(5-phosphoribosyl)-5-[(5-phosphoribosylamino)methylideneamino] imidazole-4-carboxamide isomerase (251 aa).

Asp-8 serves as the catalytic Proton acceptor. Residue Asp-131 is the Proton donor of the active site.

This sequence belongs to the HisA/HisF family.

The protein resides in the cytoplasm. The catalysed reaction is 1-(5-phospho-beta-D-ribosyl)-5-[(5-phospho-beta-D-ribosylamino)methylideneamino]imidazole-4-carboxamide = 5-[(5-phospho-1-deoxy-D-ribulos-1-ylimino)methylamino]-1-(5-phospho-beta-D-ribosyl)imidazole-4-carboxamide. The protein operates within amino-acid biosynthesis; L-histidine biosynthesis; L-histidine from 5-phospho-alpha-D-ribose 1-diphosphate: step 4/9. This is 1-(5-phosphoribosyl)-5-[(5-phosphoribosylamino)methylideneamino] imidazole-4-carboxamide isomerase from Burkholderia cenocepacia (strain HI2424).